The chain runs to 115 residues: Phosphoribosyl-AMP cyclohydrolase (115 aa).

Mg(2+) is bound at residue Asp80. Cys81 serves as a coordination point for Zn(2+). Mg(2+)-binding residues include Asp82 and Asp84. Residues Cys97 and Cys104 each coordinate Zn(2+).

The protein belongs to the PRA-CH family. As to quaternary structure, homodimer. Mg(2+) is required as a cofactor. It depends on Zn(2+) as a cofactor.

It is found in the cytoplasm. It carries out the reaction 1-(5-phospho-beta-D-ribosyl)-5'-AMP + H2O = 1-(5-phospho-beta-D-ribosyl)-5-[(5-phospho-beta-D-ribosylamino)methylideneamino]imidazole-4-carboxamide. Its pathway is amino-acid biosynthesis; L-histidine biosynthesis; L-histidine from 5-phospho-alpha-D-ribose 1-diphosphate: step 3/9. Its function is as follows. Catalyzes the hydrolysis of the adenine ring of phosphoribosyl-AMP. The sequence is that of Phosphoribosyl-AMP cyclohydrolase from Rhodococcus erythropolis (strain PR4 / NBRC 100887).